A 357-amino-acid chain; its full sequence is Cobalt-precorrin-5B C(1)-methyltransferase (357 aa).

It belongs to the CbiD family.

It catalyses the reaction Co-precorrin-5B + S-adenosyl-L-methionine = Co-precorrin-6A + S-adenosyl-L-homocysteine. It functions in the pathway cofactor biosynthesis; adenosylcobalamin biosynthesis; cob(II)yrinate a,c-diamide from sirohydrochlorin (anaerobic route): step 6/10. Functionally, catalyzes the methylation of C-1 in cobalt-precorrin-5B to form cobalt-precorrin-6A. The protein is Cobalt-precorrin-5B C(1)-methyltransferase of Rhodospirillum rubrum (strain ATCC 11170 / ATH 1.1.1 / DSM 467 / LMG 4362 / NCIMB 8255 / S1).